The chain runs to 354 residues: Methylthioribose-1-phosphate isomerase (354 aa).

Asp246 acts as the Proton donor in catalysis.

It belongs to the eIF-2B alpha/beta/delta subunits family. MtnA subfamily.

The protein resides in the cytoplasm. The protein localises to the nucleus. The enzyme catalyses 5-(methylsulfanyl)-alpha-D-ribose 1-phosphate = 5-(methylsulfanyl)-D-ribulose 1-phosphate. The protein operates within amino-acid biosynthesis; L-methionine biosynthesis via salvage pathway; L-methionine from S-methyl-5-thio-alpha-D-ribose 1-phosphate: step 1/6. Functionally, catalyzes the interconversion of methylthioribose-1-phosphate (MTR-1-P) into methylthioribulose-1-phosphate (MTRu-1-P). The sequence is that of Methylthioribose-1-phosphate isomerase (mri1) from Xenopus tropicalis (Western clawed frog).